Consider the following 93-residue polypeptide: MTKSELIERLCAEQTHLSAKEIEDAVKDILEHMASTLESGDRIEIRGFGSFSLHYREPRVGRNPKTGDKVELEGKYVPHFKPGKELRERVHIG.

Belongs to the bacterial histone-like protein family. As to quaternary structure, heterodimer of an alpha and a beta chain.

Its function is as follows. This protein is one of the two subunits of integration host factor, a specific DNA-binding protein that functions in genetic recombination as well as in transcriptional and translational control. The polypeptide is Integration host factor subunit beta (Vibrio vulnificus (strain YJ016)).